The primary structure comprises 198 residues: MDSLLMKQKKFLYHFKNVRWAKGRHETYLCYVVKRRDSATSCSLDFGHLRNKSGCHVELLFLRYISDWDLDPGRCYRVTWFTSWSPCYDCARHVAEFLRWNPNLSLRIFTARLYFCEDRKAEPEGLRRLHRAGVQIGIMTFKDYFYCWNTFVENRERTFKAWEGLHENSVRLTRQLRRILLPLYEVDDLRDAFRMLGF.

The Bipartite nuclear localization signal motif lies at Met-1–Cys-30. Residues Asp-2–Glu-26 form an interaction with SUPT6H region. Positions Gly-23–Leu-129 constitute a CMP/dCMP-type deaminase domain. Thr-27 is modified (phosphothreonine; by PKA). Ser-38 bears the Phosphoserine; by PKA mark. Residues Ala-39–Cys-42 are important for interaction with CTNNBL1. His-56 contacts Zn(2+). The Proton donor role is filled by Glu-58. Zn(2+) contacts are provided by Cys-87 and Cys-90. Residues Tyr-88 to Cys-116 form a required for interaction with RNF126 region. Positions Leu-183 to Phe-198 match the Nuclear export signal motif.

This sequence belongs to the cytidine and deoxycytidylate deaminase family. In terms of assembly, interacts with CTNNBL1; the interaction is important for the immunoglobulin switch activity of AICDA. Interacts (via its NLS) with KPNA1. Interacts with PKA/PRKACA and PRKAR1A/PKR1. Interacts with SUPT6H, TRIM28 and NCL. Directly interacts with MCM3AP/GANP; this interaction may favor AICDA recruitment to immunoglobulin variable region genes, hence promoting somatic hypermutations. The cofactor is Zn(2+). Ser-38 is the major site whereas Thr-27 is the minor site of phosphorylation. Phosphorylation regulates its class-switch recombination activity. In terms of processing, probably monoubiquitinated on several residues by RNF126. Expressed in germinal center B-cells (at protein level).

It is found in the nucleus. The protein resides in the cytoplasm. It catalyses the reaction a 2'-deoxycytidine in single-stranded DNA + H2O + H(+) = a 2'-deoxyuridine in single-stranded DNA + NH4(+). Its function is as follows. Single-stranded DNA-specific cytidine deaminase. Involved in somatic hypermutation (SHM), gene conversion, and class-switch recombination (CSR) in B-lymphocytes by deaminating C to U during transcription of Ig-variable (V) and Ig-switch (S) region DNA. Required for several crucial steps of B-cell terminal differentiation necessary for efficient antibody responses. May also play a role in the epigenetic regulation of gene expression by participating in DNA demethylation. The protein is Single-stranded DNA cytosine deaminase (Aicda) of Mus musculus (Mouse).